We begin with the raw amino-acid sequence, 299 residues long: HTH-type transcriptional regulator ArgP (299 aa).

Positions 4–60 (PDYRTLQALDAVIRERGFERAAQKLCITQSAVSQRIKQLENMFGQPLLVRTVPPRPT) constitute an HTH lysR-type domain. Residues 21-40 (FERAAQKLCITQSAVSQRIK) constitute a DNA-binding region (H-T-H motif).

Belongs to the LysR transcriptional regulatory family. Homodimer.

In terms of biological role, controls the transcription of genes involved in arginine and lysine metabolism. This Erwinia tasmaniensis (strain DSM 17950 / CFBP 7177 / CIP 109463 / NCPPB 4357 / Et1/99) protein is HTH-type transcriptional regulator ArgP.